A 657-amino-acid polypeptide reads, in one-letter code: Zinc transporter ZIP4 (657 aa).

Residues 1 to 22 (MMLPKSLTQGLLLAMLVGTAAM) form the signal peptide. Residues 23–335 (VQPYHLLSLL…QDQLSQAERY (313 aa)) lie on the Extracellular side of the membrane. N-linked (GlcNAc...) asparagine glycans are attached at residues Asn193, Asn220, and Asn268. The chain crosses the membrane as a helical span at residues 336-356 (LYGSLATLLICLCAVFGLLLL). Over 357–374 (TCAKCSTATHYIMQTFLS) the chain is Cytoplasmic. The helical transmembrane segment at 375–395 (LAVGALTGDALLHLIPKVLGL) threads the bilayer. The Extracellular segment spans residues 396–417 (HTHSGEVHSHEEESIGGQSTWR). The chain crosses the membrane as a helical span at residues 418-438 (LLAVLGGFYIFFLFESFFNLL). Residues 439–508 (LPRDQDHEKD…LRAELRMLPY (70 aa)) lie on the Cytoplasmic side of the membrane. Positions 462–464 (LQL) match the Essential for SLC39A4 endocytosis motif. Residues 467 to 491 (SNLRQSKQPHESSRSDLVTEETPEL) are disordered. Residues 509–528 (LITLGDAVHNFADGLAVGAA) traverse the membrane as a helical segment. The Zn(2+) site is built by His517, Asn518, and Asp521. Residues 529–536 (FSSTWKTG) lie on the Extracellular side of the membrane. A helical transmembrane segment spans residues 537–563 (LATSLAVFCHELPHELGDFAALLHAGL). Positions 546, 547, and 550 each coordinate Zn(2+). Residues 564-568 (TVKRA) lie on the Cytoplasmic side of the membrane. A helical membrane pass occupies residues 569-589 (LLLNLASALTAFAGLYVALAV). The Extracellular segment spans residues 590–597 (GVGEEGET). Residues 598–618 (WILAVATGLFLYVALCDMLPA) traverse the membrane as a helical segment. Topologically, residues 619–627 (MMNVRDQRP) are cytoplasmic. The chain crosses the membrane as a helical span at residues 628–648 (WLLFLLHNVGLLGGWTILLLL). The Extracellular portion of the chain corresponds to 649–657 (SLYEDSITF).

Belongs to the ZIP transporter (TC 2.A.5) family. In terms of assembly, homodimer; homodimerization is mediated by the transmembrane domain. Post-translationally, the extracellular N-terminal ectodomain is cleaved when cells are Zn(2+) deficient, N-terminally cleaved SLC39A4 is internalized at a faster rate. In terms of processing, under excess Zn(2+) conditions, SLC39A4 on the cell surface is rapidly endocytosed, ubiquitinated and degraded. Glycosylated. In terms of tissue distribution, expressed in duodenum, jejunum, and ileum.

It localises to the cell membrane. The protein resides in the recycling endosome membrane. It is found in the apical cell membrane. It catalyses the reaction Zn(2+)(in) = Zn(2+)(out). Selective transporter that mediates the uptake of Zn(2+). Plays an essential role for dietary zinc uptake from small intestine. The Zn(2+) uniporter activity is regulated by zinc availability. Also exhibits polyspecific binding and transport of Cu(2+), Cd(2+) and possibly Ni(2+) but at higher concentrations. The chain is Zinc transporter ZIP4 (Slc39a4) from Rattus norvegicus (Rat).